A 109-amino-acid chain; its full sequence is Small ribosomal subunit protein eS25 (109 aa).

The segment at 1–36 is disordered; sequence MGGASKKPISTVEKRMKKMAEEQQKKQQKRATTKTG. Over residues 12–25 the composition is skewed to basic and acidic residues; that stretch reads VEKRMKKMAEEQQK.

The protein belongs to the eukaryotic ribosomal protein eS25 family.

The polypeptide is Small ribosomal subunit protein eS25 (rps25e) (Sulfurisphaera tokodaii (strain DSM 16993 / JCM 10545 / NBRC 100140 / 7) (Sulfolobus tokodaii)).